The following is a 312-amino-acid chain: Zinc finger CCCH domain-containing protein 25 (312 aa).

Positions 36 to 114 (AYVFVGGIPY…RIVRVDHVSK (79 aa)) constitute an RRM domain. The C3H1-type zinc finger occupies 130–157 (REARGVCYAFQKGECNRGASCRYSHDEQ). Residues 153–312 (SHDEQRNANT…DSERYRKSRR (160 aa)) are disordered. Basic and acidic residues-rich tracts occupy residues 166–184 (SKEE…EPPM), 197–210 (RFPD…KSTG), and 219–312 (EAYK…KSRR).

This Oryza sativa subsp. japonica (Rice) protein is Zinc finger CCCH domain-containing protein 25.